The chain runs to 338 residues: Ketol-acid reductoisomerase (NADP(+)) (338 aa).

The 181-residue stretch at 1–181 folds into the KARI N-terminal Rossmann domain; it reads MKVYYDKDCD…GGGRTGIIET (181 aa). NADP(+) is bound by residues 24–27, Arg-47, Ser-50, Thr-52, and 82–85; these read YGSQ and DEFQ. The active site involves His-107. Position 133 (Gly-133) interacts with NADP(+). Residues 182–327 enclose the KARI C-terminal knotted domain; that stretch reads TFKDETETDL…EQLRAMMPWI (146 aa). 4 residues coordinate Mg(2+): Asp-190, Glu-194, Glu-226, and Glu-230. Residue Ser-251 coordinates substrate.

Belongs to the ketol-acid reductoisomerase family. The cofactor is Mg(2+).

The enzyme catalyses (2R)-2,3-dihydroxy-3-methylbutanoate + NADP(+) = (2S)-2-acetolactate + NADPH + H(+). It carries out the reaction (2R,3R)-2,3-dihydroxy-3-methylpentanoate + NADP(+) = (S)-2-ethyl-2-hydroxy-3-oxobutanoate + NADPH + H(+). The protein operates within amino-acid biosynthesis; L-isoleucine biosynthesis; L-isoleucine from 2-oxobutanoate: step 2/4. It functions in the pathway amino-acid biosynthesis; L-valine biosynthesis; L-valine from pyruvate: step 2/4. Its function is as follows. Involved in the biosynthesis of branched-chain amino acids (BCAA). Catalyzes an alkyl-migration followed by a ketol-acid reduction of (S)-2-acetolactate (S2AL) to yield (R)-2,3-dihydroxy-isovalerate. In the isomerase reaction, S2AL is rearranged via a Mg-dependent methyl migration to produce 3-hydroxy-3-methyl-2-ketobutyrate (HMKB). In the reductase reaction, this 2-ketoacid undergoes a metal-dependent reduction by NADPH to yield (R)-2,3-dihydroxy-isovalerate. This is Ketol-acid reductoisomerase (NADP(+)) from Ectopseudomonas mendocina (strain ymp) (Pseudomonas mendocina).